The sequence spans 398 residues: Methionine import ATP-binding protein MetN 2 (398 aa).

One can recognise an ABC transporter domain in the interval 43 to 282 (VSLEQVGKVF…PRHGATRALL (240 aa)). Position 79–86 (79–86 (GRSGAGKS)) interacts with ATP.

The protein belongs to the ABC transporter superfamily. Methionine importer (TC 3.A.1.24) family. In terms of assembly, the complex is composed of two ATP-binding proteins (MetN), two transmembrane proteins (MetI) and a solute-binding protein (MetQ).

The protein resides in the cell inner membrane. It catalyses the reaction L-methionine(out) + ATP + H2O = L-methionine(in) + ADP + phosphate + H(+). It carries out the reaction D-methionine(out) + ATP + H2O = D-methionine(in) + ADP + phosphate + H(+). Functionally, part of the ABC transporter complex MetNIQ involved in methionine import. Responsible for energy coupling to the transport system. The protein is Methionine import ATP-binding protein MetN 2 of Burkholderia lata (strain ATCC 17760 / DSM 23089 / LMG 22485 / NCIMB 9086 / R18194 / 383).